The chain runs to 618 residues: DNA mismatch repair protein MutL (618 aa).

The span at 367-381 shows a compositional bias: low complexity; the sequence is EPTAAREPATPRYSG. The segment at 367-402 is disordered; that stretch reads EPTAAREPATPRYSGGASGGNGGRQSAGGWPHAQPG. Over residues 382 to 392 the composition is skewed to gly residues; the sequence is GASGGNGGRQS.

The protein belongs to the DNA mismatch repair MutL/HexB family.

This protein is involved in the repair of mismatches in DNA. It is required for dam-dependent methyl-directed DNA mismatch repair. May act as a 'molecular matchmaker', a protein that promotes the formation of a stable complex between two or more DNA-binding proteins in an ATP-dependent manner without itself being part of a final effector complex. This is DNA mismatch repair protein MutL from Salmonella dublin (strain CT_02021853).